A 155-amino-acid polypeptide reads, in one-letter code: MSRKGSTPQRTVLPDPKHGSETIARFINMVMQSGKKSVAEKIVYGAMDVIGEKNPNAIELVQKALDNVAPAVEVKSRRVGGATYQVPVEVRSSRRMALAMRWLIDSARKRGENTMPRKLAAELLDASESRGGAIKKREETHRMAEANKAFAHYRW.

The protein belongs to the universal ribosomal protein uS7 family. In terms of assembly, part of the 30S ribosomal subunit. Contacts proteins S9 and S11.

One of the primary rRNA binding proteins, it binds directly to 16S rRNA where it nucleates assembly of the head domain of the 30S subunit. Is located at the subunit interface close to the decoding center, probably blocks exit of the E-site tRNA. This is Small ribosomal subunit protein uS7 from Xanthomonas axonopodis pv. citri (strain 306).